The sequence spans 292 residues: PLRDTHPHLTMKNQTFHLQGFVDGLRDLTTTERHHNAYGDPFTTLSPVVPTVSTTLSPPSTTGDPALSPEMSPSSLLGLLAGLQVVYFLWTKIPTIAQNLDWWWTSLSFPGGIPECTGQNSQFQTCKHLPTSCPPTCNGFRWMYLRRFIIYLLVLLLCLIFLLVLLDWKGLLPVCPLQPTTETTVNCRQCTLSVQDTYTPPYCCCLKPTAGNCTCWPIPSSWALGNYLWEWALARFSWLNLLVPLLQWLGGISLIAWFLLIWMIWFWGPALLSILPPFIPIFVLFFLIWVYI.

Positions 1–10 (PLRDTHPHLT) are pre-S1. The segment at 1–70 (PLRDTHPHLT…TTGDPALSPE (70 aa)) is pre-S. The Virion surface; in external conformation portion of the chain corresponds to 1 to 75 (PLRDTHPHLT…ALSPEMSPSS (75 aa)). Residues 1–147 (PLRDTHPHLT…NGFRWMYLRR (147 aa)) lie on the Intravirion; in internal conformation side of the membrane. Residue Arg3 is glycosylated (N-linked (GlcNAc...) asparagine). A pre-S2 region spans residues 11–70 (MKNQTFHLQGFVDGLRDLTTTERHHNAYGDPFTTLSPVVPTVSTTLSPPSTTGDPALSPE). Residues 76–96 (LLGLLAGLQVVYFLWTKIPTI) traverse the membrane as a helical segment. Topologically, residues 97 to 147 (AQNLDWWWTSLSFPGGIPECTGQNSQFQTCKHLPTSCPPTCNGFRWMYLRR) are intravirion; in external conformation. A helical transmembrane segment spans residues 148-168 (FIIYLLVLLLCLIFLLVLLDW). The Virion surface portion of the chain corresponds to 169–240 (KGLLPVCPLQ…WALARFSWLN (72 aa)). A glycan (N-linked (GlcNAc...) asparagine; by host) is linked at Asn212. A helical membrane pass occupies residues 241-261 (LLVPLLQWLGGISLIAWFLLI). Topologically, residues 262-267 (WMIWFW) are intravirion. Residues 268 to 290 (GPALLSILPPFIPIFVLFFLIWV) form a helical membrane-spanning segment. Topologically, residues 291–292 (YI) are virion surface.

The protein belongs to the orthohepadnavirus major surface antigen family. As to quaternary structure, in its internal form (Li-HBsAg), interacts with the capsid protein and with the isoform S. Interacts with host chaperone CANX. In terms of assembly, associates with host chaperone CANX through its pre-S2 N glycan; this association may be essential for isoform M proper secretion. Interacts with isoform L. Interacts with the antigens of satellite virus HDV (HDVAgs); this interaction is required for encapsidation of HDV genomic RNA. Isoform M is N-glycosylated by host at the pre-S2 region. In terms of processing, myristoylated.

The protein localises to the virion membrane. In terms of biological role, the large envelope protein exists in two topological conformations, one which is termed 'external' or Le-HBsAg and the other 'internal' or Li-HBsAg. In its external conformation the protein attaches the virus to cell receptors and thereby initiating infection. This interaction determines the species specificity and liver tropism. The large envelope protein probably also assumes fusion between virion and host membranes. In its internal conformation the protein plays a role in virion morphogenesis and mediates the contact with the nucleocapsid like a matrix protein. Its function is as follows. The middle envelope protein plays an important role in the budding of the virion. It is involved in the induction of budding in a nucleocapsid independent way. In this process the majority of envelope proteins bud to form subviral lipoprotein particles of 22 nm of diameter that do not contain a nucleocapsid. The sequence is that of Large envelope protein (S) from Marmota monax (Woodchuck).